The chain runs to 153 residues: E3 ubiquitin-protein ligase AIRP1 (153 aa).

An RING-type; atypical zinc finger spans residues 104 to 145 (CPICLEEYEIDNPKLLTKCGHDFHLACILAWMERSEACPVCD).

Its subcellular location is the cytoplasm. It localises to the cytosol. The enzyme catalyses S-ubiquitinyl-[E2 ubiquitin-conjugating enzyme]-L-cysteine + [acceptor protein]-L-lysine = [E2 ubiquitin-conjugating enzyme]-L-cysteine + N(6)-ubiquitinyl-[acceptor protein]-L-lysine.. In terms of biological role, possesses E3 ubiquitin-protein ligase activity in vitro when associated with the E2 enzyme UBC8 in vitro. Plays combinatory roles with AIRP2 in the positive regulation of the abscisic acid-mediated drought stress response. The protein is E3 ubiquitin-protein ligase AIRP1 of Arabidopsis thaliana (Mouse-ear cress).